A 65-amino-acid polypeptide reads, in one-letter code: Large ribosomal subunit protein bL35 (65 aa).

This sequence belongs to the bacterial ribosomal protein bL35 family.

The sequence is that of Large ribosomal subunit protein bL35 from Prochlorococcus marinus (strain NATL1A).